The primary structure comprises 231 residues: Endonuclease NucS (231 aa).

It belongs to the NucS endonuclease family.

Its subcellular location is the cytoplasm. Cleaves both 3' and 5' ssDNA extremities of branched DNA structures. In Micrococcus luteus (strain ATCC 4698 / DSM 20030 / JCM 1464 / CCM 169 / CCUG 5858 / IAM 1056 / NBRC 3333 / NCIMB 9278 / NCTC 2665 / VKM Ac-2230) (Micrococcus lysodeikticus), this protein is Endonuclease NucS.